A 419-amino-acid chain; its full sequence is Sulfate adenylyltransferase (419 aa).

This sequence belongs to the sulfate adenylyltransferase family.

It catalyses the reaction sulfate + ATP + H(+) = adenosine 5'-phosphosulfate + diphosphate. Its pathway is sulfur metabolism; hydrogen sulfide biosynthesis; sulfite from sulfate: step 1/3. The protein is Sulfate adenylyltransferase of Psychrobacter sp. (strain PRwf-1).